The primary structure comprises 135 residues: Small ribosomal subunit protein uS11 (135 aa).

The segment covering Met-1–Val-11 has biased composition (low complexity). Residues Met-1–Val-22 form a disordered region.

The protein belongs to the universal ribosomal protein uS11 family. In terms of assembly, part of the 30S ribosomal subunit. Interacts with proteins S7 and S18. Binds to IF-3.

In terms of biological role, located on the platform of the 30S subunit, it bridges several disparate RNA helices of the 16S rRNA. Forms part of the Shine-Dalgarno cleft in the 70S ribosome. The polypeptide is Small ribosomal subunit protein uS11 (Salinispora tropica (strain ATCC BAA-916 / DSM 44818 / JCM 13857 / NBRC 105044 / CNB-440)).